Reading from the N-terminus, the 361-residue chain is Porphobilinogen deaminase (361 aa).

The residue at position 2 (Ser2) is an N-acetylserine. Residue Ser69 is modified to Phosphoserine. Lys74 carries the N6-acetyllysine modification. Ser147 carries the post-translational modification Phosphoserine. Cys261 carries the post-translational modification S-(dipyrrolylmethanemethyl)cysteine.

Belongs to the HMBS family. As to quaternary structure, monomer. Requires dipyrromethane as cofactor.

The protein resides in the cytoplasm. Its subcellular location is the cytosol. It catalyses the reaction 4 porphobilinogen + H2O = hydroxymethylbilane + 4 NH4(+). Its pathway is porphyrin-containing compound metabolism; protoporphyrin-IX biosynthesis; coproporphyrinogen-III from 5-aminolevulinate: step 2/4. As part of the heme biosynthetic pathway, catalyzes the sequential polymerization of four molecules of porphobilinogen to form hydroxymethylbilane, also known as preuroporphyrinogen. Catalysis begins with the assembly of the dipyrromethane cofactor by the apoenzyme from two molecules of porphobilinogen or from preuroporphyrinogen. The covalently linked cofactor acts as a primer, around which the tetrapyrrole product is assembled. In the last step of catalysis, the product, preuroporphyrinogen, is released, leaving the cofactor bound to the holodeaminase intact. The chain is Porphobilinogen deaminase (HMBS) from Bos taurus (Bovine).